Reading from the N-terminus, the 92-residue chain is SPbeta prophage-derived DNA-binding protein HU 2 (92 aa).

T4 carries the phosphothreonine modification. The tract at residues 55-77 (RAARKGRNPQTGEEIDIPATKAP) is disordered.

It belongs to the bacterial histone-like protein family. In terms of assembly, homodimer.

In terms of biological role, histone-like DNA-binding protein which is capable of wrapping DNA to stabilize it, and thus to prevent its denaturation under extreme environmental conditions. The chain is SPbeta prophage-derived DNA-binding protein HU 2 (hup2) from Bacillus subtilis (strain 168).